Here is an 808-residue protein sequence, read N- to C-terminus: MGEPVLTRVHSLRERMDSTLANHRNEILMFLSRIESHGKGILKPHQLLAEYEAISKEDKLKLDDGHGAFAEVIKSTQEAIVSPPWVALAIRLRPGVWEYVRVNVHHLVVEELSVPQYLQFKEELVIGSSDANFVLELDFAPFTASFPRPTLTKSIGNGVEFLNRHLSAKMFHGKDSMHPLLEFLRLHNYNGKTLMLNNRVQNVNGLQSMLRKAGDYLSTLPSDTPYSEFEHKFQEIGFERGWGDTAERVTEMFHMLLDLLEAPDASTLETFLGKIPMVFNVVILSPHGYFAQENVLGYPDTGGQVVYILDQVPALEREMIKRIKEQGLDIKPRILIVTRLLPDAVGTTCNQRLEKVFGAEHAHILRVPFRTEKGILRKWISRFEVWPYIETFTEDVAKEIALELQAKPDLIIGNYSEGNLVASLLAHKLGVTQCTIAHALEKTKYPDSDIYWEKFDKKYHFSSQFTADLIAMNHTDFIITSTFQEIAGSKDTVGQYESHTAFTMPGLYRVVHGIDVFDPKFNIVSPGADTSVYFSYKEKEKRLTTLHPEIEELLYSSVENEEHLCIIKDKNKPILFTMARLDNVKNLTGFVEWYAKSPKLRELVNLVVVGGDRRKESKDLEEQAQMKKMYELIDTYKLNGQFRWISSQMNRVRNGELYRYIADTKGAFVQPAFYEAFGLTVVEAMTCGLPTFATLHGGPAEIIVHGKSGFHIDPYHGEQVAELLVNFFEKCKTDPSQWDAISAGGLKRIQEKYTWQIYSERLLTLAGVYGFWKHVSKLDRLEIRRYLEMFYALKYRKLAESVPLAKDE.

A GT-B glycosyltransferase region spans residues 277–754; the sequence is MVFNVVILSP…GLKRIQEKYT (478 aa).

The protein belongs to the glycosyltransferase 1 family. Plant sucrose synthase subfamily. Homotetramer. Expressed in stems, in roots at different developmental stages, and in flower buds, flowers and maturing seeds, with the highest levels in strong utilization sinks for sucrose such as growing stems and tap root tips.

The catalysed reaction is an NDP-alpha-D-glucose + D-fructose = a ribonucleoside 5'-diphosphate + sucrose + H(+). Fructose acts as a non-competitive inhibitor with an inhibition constant of 17.2 mM. In contrast, glucose inhibits uncompetitively with an inhibition constant of 4.3 mM. Functionally, sucrose-cleaving enzyme that provides UDP-glucose and fructose for various metabolic pathways. In Daucus carota (Wild carrot), this protein is Sucrose synthase isoform 1.